The chain runs to 194 residues: Naphthalene 1,2-dioxygenase system, small oxygenase component (194 aa).

The protein belongs to the bacterial ring-hydroxylating dioxygenase beta subunit family. As to quaternary structure, the naphthalene dioxygenase (NDO) multicomponent enzyme system is composed of an electron transfer component and a dioxygenase component (iron sulfur protein (ISP)). The electron transfer component is composed of a ferredoxin reductase (NdoR) and a ferredoxin (NdoA), and the dioxygenase component is formed of a heterohexamer (trimer of heterodimers) of three large alpha subunits (NdoB) and three small beta subunits (NdoC).

It participates in aromatic compound metabolism; naphthalene degradation. Its function is as follows. Component of the naphthalene dioxygenase (NDO) multicomponent enzyme system which catalyzes the incorporation of both atoms of molecular oxygen into naphthalene to form cis-(1R,2S)-dihydroxy-1,2-dihydronaphthalene. The beta subunit seems to have a structural role in the holoenzyme. Also able to catalyze the cis-dihydroxylation of biphenyl and phenanthrene. The polypeptide is Naphthalene 1,2-dioxygenase system, small oxygenase component (Pseudomonas putida (Arthrobacter siderocapsulatus)).